Reading from the N-terminus, the 246-residue chain is DNA polymerase sliding clamp (246 aa).

It belongs to the PCNA family. In terms of assembly, homotrimer. The subunits circularize to form a toroid; DNA passes through its center. Replication factor C (RFC) is required to load the toroid on the DNA.

In terms of biological role, sliding clamp subunit that acts as a moving platform for DNA processing. Responsible for tethering the catalytic subunit of DNA polymerase and other proteins to DNA during high-speed replication. This chain is DNA polymerase sliding clamp, found in Thermoplasma acidophilum (strain ATCC 25905 / DSM 1728 / JCM 9062 / NBRC 15155 / AMRC-C165).